We begin with the raw amino-acid sequence, 227 residues long: Cytochrome c oxidase subunit 2 (227 aa).

Topologically, residues 1–14 (MAHPVQLGLQDATS) are mitochondrial intermembrane. Residues 15–45 (PVMEELITFHDQALMAMFLISFLILYALSST) traverse the membrane as a helical segment. Residues 46-59 (LTTKLTNTNITDAQ) are Mitochondrial matrix-facing. Residues 60–87 (EMETIWTILPAVILILIALPSLRILYMT) form a helical membrane-spanning segment. At 88–227 (DEINNPSFTI…IFEMGPVFTL (140 aa)) the chain is on the mitochondrial intermembrane side. Residues His-161, Cys-196, Glu-198, Cys-200, His-204, and Met-207 each contribute to the Cu cation site. Residue Glu-198 coordinates Mg(2+).

Belongs to the cytochrome c oxidase subunit 2 family. As to quaternary structure, component of the cytochrome c oxidase (complex IV, CIV), a multisubunit enzyme composed of 14 subunits. The complex is composed of a catalytic core of 3 subunits MT-CO1, MT-CO2 and MT-CO3, encoded in the mitochondrial DNA, and 11 supernumerary subunits COX4I, COX5A, COX5B, COX6A, COX6B, COX6C, COX7A, COX7B, COX7C, COX8 and NDUFA4, which are encoded in the nuclear genome. The complex exists as a monomer or a dimer and forms supercomplexes (SCs) in the inner mitochondrial membrane with NADH-ubiquinone oxidoreductase (complex I, CI) and ubiquinol-cytochrome c oxidoreductase (cytochrome b-c1 complex, complex III, CIII), resulting in different assemblies (supercomplex SCI(1)III(2)IV(1) and megacomplex MCI(2)III(2)IV(2)). Found in a complex with TMEM177, COA6, COX18, COX20, SCO1 and SCO2. Interacts with TMEM177 in a COX20-dependent manner. Interacts with COX20. Interacts with COX16. It depends on Cu cation as a cofactor.

Its subcellular location is the mitochondrion inner membrane. The enzyme catalyses 4 Fe(II)-[cytochrome c] + O2 + 8 H(+)(in) = 4 Fe(III)-[cytochrome c] + 2 H2O + 4 H(+)(out). In terms of biological role, component of the cytochrome c oxidase, the last enzyme in the mitochondrial electron transport chain which drives oxidative phosphorylation. The respiratory chain contains 3 multisubunit complexes succinate dehydrogenase (complex II, CII), ubiquinol-cytochrome c oxidoreductase (cytochrome b-c1 complex, complex III, CIII) and cytochrome c oxidase (complex IV, CIV), that cooperate to transfer electrons derived from NADH and succinate to molecular oxygen, creating an electrochemical gradient over the inner membrane that drives transmembrane transport and the ATP synthase. Cytochrome c oxidase is the component of the respiratory chain that catalyzes the reduction of oxygen to water. Electrons originating from reduced cytochrome c in the intermembrane space (IMS) are transferred via the dinuclear copper A center (CU(A)) of subunit 2 and heme A of subunit 1 to the active site in subunit 1, a binuclear center (BNC) formed by heme A3 and copper B (CU(B)). The BNC reduces molecular oxygen to 2 water molecules using 4 electrons from cytochrome c in the IMS and 4 protons from the mitochondrial matrix. This is Cytochrome c oxidase subunit 2 (MT-CO2) from Papio anubis (Olive baboon).